Here is a 429-residue protein sequence, read N- to C-terminus: D-amino acid dehydrogenase (429 aa).

FAD is bound at residue 3 to 17 (VVVLGSGVVGVTSAY).

This sequence belongs to the DadA oxidoreductase family. FAD is required as a cofactor.

It carries out the reaction a D-alpha-amino acid + A + H2O = a 2-oxocarboxylate + AH2 + NH4(+). Its pathway is amino-acid degradation; D-alanine degradation; NH(3) and pyruvate from D-alanine: step 1/1. Functionally, oxidative deamination of D-amino acids. The protein is D-amino acid dehydrogenase of Paraburkholderia xenovorans (strain LB400).